Here is a 224-residue protein sequence, read N- to C-terminus: Fibronectin type III domain-containing protein 9 (224 aa).

The Fibronectin type-III domain maps to 1-101 (MNIEVGNISY…FHTLDKSPLA (101 aa)). A helical transmembrane segment spans residues 113–133 (LWVLMAILLACFTAVLAFICL). The disordered stretch occupies residues 175-224 (LQGLPLVEMPRKNSRDGAELDPEANQDAPDAGALQRGGGDPPAILPHCGE). Residues 183 to 192 (MPRKNSRDGA) show a composition bias toward basic and acidic residues.

Its subcellular location is the membrane. This chain is Fibronectin type III domain-containing protein 9 (FNDC9), found in Homo sapiens (Human).